A 130-amino-acid chain; its full sequence is Glycine cleavage system H protein (130 aa).

Positions 24 to 106 (TLTIGITDHA…YGEGWIMRIR (83 aa)) constitute a Lipoyl-binding domain. Lysine 65 carries the post-translational modification N6-lipoyllysine. Residues 111 to 130 (DDLEQLLDPEDYQDLVADEE) are disordered.

Belongs to the GcvH family. As to quaternary structure, the glycine cleavage system is composed of four proteins: P, T, L and H. (R)-lipoate is required as a cofactor.

In terms of biological role, the glycine cleavage system catalyzes the degradation of glycine. The H protein shuttles the methylamine group of glycine from the P protein to the T protein. This Alkalilimnicola ehrlichii (strain ATCC BAA-1101 / DSM 17681 / MLHE-1) protein is Glycine cleavage system H protein.